Here is a 396-residue protein sequence, read N- to C-terminus: S-adenosylmethionine synthase (396 aa).

Histidine 14 contacts ATP. Residue aspartate 16 participates in Mg(2+) binding. Glutamate 42 lines the K(+) pocket. Residues glutamate 55 and glutamine 98 each contribute to the L-methionine site. The tract at residues 98-108 (QSPDIALGVNE) is flexible loop. ATP-binding positions include 174-176 (DGK), 241-242 (RF), aspartate 250, 256-257 (RK), alanine 273, and lysine 277. An L-methionine-binding site is contributed by aspartate 250. Lysine 281 contributes to the L-methionine binding site.

It belongs to the AdoMet synthase family. In terms of assembly, homotetramer; dimer of dimers. Requires Mg(2+) as cofactor. It depends on K(+) as a cofactor.

It localises to the cytoplasm. It carries out the reaction L-methionine + ATP + H2O = S-adenosyl-L-methionine + phosphate + diphosphate. Its pathway is amino-acid biosynthesis; S-adenosyl-L-methionine biosynthesis; S-adenosyl-L-methionine from L-methionine: step 1/1. Its function is as follows. Catalyzes the formation of S-adenosylmethionine (AdoMet) from methionine and ATP. The overall synthetic reaction is composed of two sequential steps, AdoMet formation and the subsequent tripolyphosphate hydrolysis which occurs prior to release of AdoMet from the enzyme. The sequence is that of S-adenosylmethionine synthase from Fervidobacterium nodosum (strain ATCC 35602 / DSM 5306 / Rt17-B1).